The sequence spans 118 residues: Small ribosomal subunit protein uS13 (118 aa).

The interval 94–118 is disordered; it reads GLPVRGQRTKTNARTRKGPRKPIKK.

The protein belongs to the universal ribosomal protein uS13 family. In terms of assembly, part of the 30S ribosomal subunit. Forms a loose heterodimer with protein S19. Forms two bridges to the 50S subunit in the 70S ribosome.

Functionally, located at the top of the head of the 30S subunit, it contacts several helices of the 16S rRNA. In the 70S ribosome it contacts the 23S rRNA (bridge B1a) and protein L5 of the 50S subunit (bridge B1b), connecting the 2 subunits; these bridges are implicated in subunit movement. Contacts the tRNAs in the A and P-sites. The chain is Small ribosomal subunit protein uS13 from Pasteurella multocida (strain Pm70).